The primary structure comprises 416 residues: Hepatic and glial cell adhesion molecule (416 aa).

A signal peptide spans 1 to 33 (MKRERGALSRASRALRLAPFVYLLLIQTDPLEG). Residues 34–142 (VNITSPVRLI…GEKTINLTVD (109 aa)) enclose the Ig-like V-type domain. Residues 34 to 240 (VNITSPVRLI…VKITVYRRSS (207 aa)) lie on the Extracellular side of the membrane. N-linked (GlcNAc...) asparagine glycans are attached at residues Asn35, Asn138, Asn167, and Asn189. An Ig-like C2-type domain is found at 148 to 234 (PQVLVASTTV…QGRSLPVKIT (87 aa)). Cys168 and Cys217 form a disulfide bridge. The chain crosses the membrane as a helical span at residues 241–261 (LYIILSTGGIFLLVTLVTVCA). Residues 262 to 416 (CWKPSKRKQK…DEAGPVEISA (155 aa)) are Cytoplasmic-facing. Positions 273 to 416 (LEKQNSLEYM…DEAGPVEISA (144 aa)) are disordered. A Phosphoserine modification is found at Ser278. Residues 285–306 (NDDRLKPEADTLPRSGEQERKN) show a composition bias toward basic and acidic residues. Phosphoserine occurs at positions 350 and 377. Positions 383-398 (SSPGRSRSASRTLRTA) are enriched in low complexity.

As to quaternary structure, homodimer. Dimer formation occurs predominantly through cis interactions on the cell surface. Part of a complex containing MLC1, TRPV4, AQP4 and ATP1B1. Interacts with CLCN2. N-glycosylated.

It is found in the cytoplasm. The protein resides in the cell membrane. Involved in regulating cell motility and cell-matrix interactions. May inhibit cell growth through suppression of cell proliferation. In glia, associates and targets CLCN2 at astrocytic processes and myelinated fiber tracts where it may regulate transcellular chloride flux involved in neuron excitability. This is Hepatic and glial cell adhesion molecule from Homo sapiens (Human).